The sequence spans 145 residues: Putative pre-16S rRNA nuclease (145 aa).

This sequence belongs to the YqgF nuclease family.

It localises to the cytoplasm. In terms of biological role, could be a nuclease involved in processing of the 5'-end of pre-16S rRNA. The protein is Putative pre-16S rRNA nuclease of Pseudomonas fluorescens (strain Pf0-1).